The primary structure comprises 391 residues: Tryptophan synthase beta chain (391 aa).

K84 carries the N6-(pyridoxal phosphate)lysine modification.

Belongs to the TrpB family. Tetramer of two alpha and two beta chains. Pyridoxal 5'-phosphate serves as cofactor.

The catalysed reaction is (1S,2R)-1-C-(indol-3-yl)glycerol 3-phosphate + L-serine = D-glyceraldehyde 3-phosphate + L-tryptophan + H2O. Its pathway is amino-acid biosynthesis; L-tryptophan biosynthesis; L-tryptophan from chorismate: step 5/5. The beta subunit is responsible for the synthesis of L-tryptophan from indole and L-serine. The protein is Tryptophan synthase beta chain of Thermoanaerobacter pseudethanolicus (strain ATCC 33223 / 39E) (Clostridium thermohydrosulfuricum).